Here is a 71-residue protein sequence, read N- to C-terminus: MPSVKVRDNEPFDVAMRRFKRSCEKAGVLAEVRSREFYEKPTQERKRKLAAAVKRNSRRLKKERSRFERLY.

Belongs to the bacterial ribosomal protein bS21 family.

The chain is Small ribosomal subunit protein bS21 from Dichelobacter nodosus (strain VCS1703A).